A 410-amino-acid polypeptide reads, in one-letter code: LL-diaminopimelate aminotransferase (410 aa).

Positions 15 and 42 each coordinate substrate. Pyridoxal 5'-phosphate contacts are provided by residues Tyr-72, 108–109, Tyr-132, Asn-187, Tyr-218, and 246–248; these read AK and SFS. The substrate site is built by Lys-109, Tyr-132, and Asn-187. Lys-249 carries the post-translational modification N6-(pyridoxal phosphate)lysine. 2 residues coordinate pyridoxal 5'-phosphate: Arg-257 and Asn-292. Substrate is bound by residues Asn-292 and Arg-388.

Belongs to the class-I pyridoxal-phosphate-dependent aminotransferase family. LL-diaminopimelate aminotransferase subfamily. As to quaternary structure, homodimer. Pyridoxal 5'-phosphate is required as a cofactor.

It catalyses the reaction (2S,6S)-2,6-diaminopimelate + 2-oxoglutarate = (S)-2,3,4,5-tetrahydrodipicolinate + L-glutamate + H2O + H(+). It functions in the pathway amino-acid biosynthesis; L-lysine biosynthesis via DAP pathway; LL-2,6-diaminopimelate from (S)-tetrahydrodipicolinate (aminotransferase route): step 1/1. Functionally, involved in the synthesis of meso-diaminopimelate (m-DAP or DL-DAP), required for both lysine and peptidoglycan biosynthesis. Catalyzes the direct conversion of tetrahydrodipicolinate to LL-diaminopimelate. The polypeptide is LL-diaminopimelate aminotransferase (Picosynechococcus sp. (strain ATCC 27264 / PCC 7002 / PR-6) (Agmenellum quadruplicatum)).